Consider the following 747-residue polypeptide: Protein FAM83C (747 aa).

The DUF1669 stretch occupies residues 1–309 (MFGGPGPGVL…LYAESQPVEG (309 aa)). 7 disordered regions span residues 322–352 (LRPP…SSIK), 374–412 (TGVV…LYRA), 462–484 (LSRF…GRWV), 517–550 (AREV…SPSQ), 588–633 (NQSR…LGHS), 646–672 (GEGP…DEKR), and 692–715 (ARQG…DLVR). Residues 328–350 (ALAFRPDVPSPTSSLPSSTSLSS) show a composition bias toward low complexity. Polar residues predominate over residues 390–402 (GQPSLHRQLSDPN). Residues 697–707 (EPGGPKGGHLN) show a composition bias toward gly residues.

Belongs to the FAM83 family. May interact with RAF1. In terms of processing, phosphorylated in vitro by CSNK1A1.

Its subcellular location is the cytoplasm. Functionally, may play a role in MAPK signaling. This chain is Protein FAM83C, found in Homo sapiens (Human).